The primary structure comprises 249 residues: Inhibitor of growth protein 4 (249 aa).

Residues 25–118 (FQLMRDLDQR…ADLKEKQIES (94 aa)) are a coiled coil. The interval 115–160 (QIESSDYDSSSSKGKKKGRAQKEKKAARARSKGKNSDEEAPKTAQK) is disordered. Residues 196–245 (PTYCLCHQVSYGEMIGCDNPDCSIEWFHFACVGLTTKPRGKWFCPRCSQE) form a PHD-type zinc finger. Positions 199, 201, 212, 217, 223, 226, 239, and 242 each coordinate Zn(2+).

Belongs to the ING family. As to quaternary structure, homodimer. Component of the HBO1 complex.

It is found in the nucleus. In terms of biological role, component of HBO1 complexes, which specifically mediate acetylation of histone H3 at 'Lys-14' (H3K14ac), and have reduced activity toward histone H4. Through chromatin acetylation it may function in DNA replication. The sequence is that of Inhibitor of growth protein 4 (ING4) from Gallus gallus (Chicken).